The primary structure comprises 207 residues: Uracil phosphoribosyltransferase (207 aa).

5-phospho-alpha-D-ribose 1-diphosphate contacts are provided by residues Arg77, Arg102, and Asp129–Ser137. Residues Ile192 and Gly197 to Ala199 each bind uracil. Asp198 lines the 5-phospho-alpha-D-ribose 1-diphosphate pocket.

The protein belongs to the UPRTase family. Mg(2+) is required as a cofactor.

The catalysed reaction is UMP + diphosphate = 5-phospho-alpha-D-ribose 1-diphosphate + uracil. The protein operates within pyrimidine metabolism; UMP biosynthesis via salvage pathway; UMP from uracil: step 1/1. Its activity is regulated as follows. Allosterically activated by GTP. Functionally, catalyzes the conversion of uracil and 5-phospho-alpha-D-ribose 1-diphosphate (PRPP) to UMP and diphosphate. In Ureaplasma parvum serovar 3 (strain ATCC 27815 / 27 / NCTC 11736), this protein is Uracil phosphoribosyltransferase.